The sequence spans 194 residues: Early E3 22.1 kDa glycoprotein (194 aa).

6 N-linked (GlcNAc...) asparagine; by host glycosylation sites follow: asparagine 19, asparagine 60, asparagine 75, asparagine 87, asparagine 125, and asparagine 138.

The chain is Early E3 22.1 kDa glycoprotein from Canine adenovirus serotype 1 (strain RI261) (CAdV-1).